A 361-amino-acid chain; its full sequence is Protein SSUH2 homolog (361 aa).

It localises to the cytoplasm. It is found in the nucleus. Functionally, plays a role in odontogenesis. The protein is Protein SSUH2 homolog of Danio rerio (Zebrafish).